The following is a 551-amino-acid chain: Hydroxymethylpyrimidine/phosphomethylpyrimidine kinase THI21 (551 aa).

Glutamine 64 is a 4-amino-5-hydroxymethyl-2-methylpyrimidine binding site.

This sequence in the N-terminal section; belongs to the ThiD family. The protein in the C-terminal section; belongs to the thiaminase-2 family.

It carries out the reaction 4-amino-5-hydroxymethyl-2-methylpyrimidine + ATP = 4-amino-2-methyl-5-(phosphooxymethyl)pyrimidine + ADP + H(+). It catalyses the reaction 4-amino-2-methyl-5-(phosphooxymethyl)pyrimidine + ATP = 4-amino-2-methyl-5-(diphosphooxymethyl)pyrimidine + ADP. It functions in the pathway cofactor biosynthesis; thiamine diphosphate biosynthesis; 4-amino-2-methyl-5-diphosphomethylpyrimidine from 5-amino-1-(5-phospho-D-ribosyl)imidazole: step 2/3. It participates in cofactor biosynthesis; thiamine diphosphate biosynthesis; 4-amino-2-methyl-5-diphosphomethylpyrimidine from 5-amino-1-(5-phospho-D-ribosyl)imidazole: step 3/3. Its function is as follows. Catalyzes the phosphorylation of hydroxymethylpyrimidine phosphate (HMP-P) to HMP-PP, and also probably that of HMP to HMP-P. This chain is Hydroxymethylpyrimidine/phosphomethylpyrimidine kinase THI21 (THI21), found in Saccharomyces cerevisiae (strain ATCC 204508 / S288c) (Baker's yeast).